The primary structure comprises 276 residues: Krueppel homolog 2 (276 aa).

The tract at residues 1–37 is disordered; the sequence is MSAPTDQPPRSEGAQTNSSERSSQQQEQPQQSQSQNV. The span at 18 to 35 shows a compositional bias: low complexity; it reads SSERSSQQQEQPQQSQSQ. A Phosphoserine modification is found at Ser22. 3 helical membrane-spanning segments follow: residues 53–73, 125–145, and 181–201; these read ALWA…LPIF, LIFF…LYSV, and ILKA…VLAF.

The protein belongs to the PER33/POM33 family.

It is found in the membrane. Member of the dosage-dependent hierarchy effective upon white gene expression. This Drosophila melanogaster (Fruit fly) protein is Krueppel homolog 2 (Kr-h2).